Here is a 246-residue protein sequence, read N- to C-terminus: uncharacterized protein (246 aa).

To M.jannaschii MJ1676.

This is an uncharacterized protein from Methanothermobacter thermautotrophicus (strain ATCC 29096 / DSM 1053 / JCM 10044 / NBRC 100330 / Delta H) (Methanobacterium thermoautotrophicum).